The sequence spans 349 residues: Twinfilin-2-A (349 aa).

ADF-H domains follow at residues 4–139 and 177–313; these read QTGI…KHVS and GLSF…DEVH. Residues 321 to 349 are disordered; it reads QAFAKPKGPAGKRGQKRLIKGPGENGEDS.

The protein belongs to the actin-binding proteins ADF family. Twinfilin subfamily. Interacts with G-actin; ADP-actin form and capping protein (CP).

Its subcellular location is the cytoplasm. The protein localises to the cytoskeleton. It is found in the perinuclear region. Its function is as follows. Actin-binding protein involved in motile and morphological processes. Inhibits actin polymerization, likely by sequestering G-actin. The chain is Twinfilin-2-A (twf2-a) from Xenopus laevis (African clawed frog).